Here is a 593-residue protein sequence, read N- to C-terminus: UvrABC system protein C (593 aa).

The GIY-YIG domain occupies Asp14–Val91. The UVR domain occupies Glu196 to Val231.

Belongs to the UvrC family. As to quaternary structure, interacts with UvrB in an incision complex.

Its subcellular location is the cytoplasm. The UvrABC repair system catalyzes the recognition and processing of DNA lesions. UvrC both incises the 5' and 3' sides of the lesion. The N-terminal half is responsible for the 3' incision and the C-terminal half is responsible for the 5' incision. This Brevibacillus brevis (strain 47 / JCM 6285 / NBRC 100599) protein is UvrABC system protein C.